The following is a 96-amino-acid chain: Large ribosomal subunit protein bL27 (96 aa).

A propeptide spanning residues 1–9 is cleaved from the precursor; that stretch reads MLRLDLQFF. The tract at residues 1-36 is disordered; the sequence is MLRLDLQFFSTKKGQGSSKNGRDSESKRLGSKRADG. Residues 8 to 19 are compositionally biased toward polar residues; it reads FFSTKKGQGSSK. Positions 20-35 are enriched in basic and acidic residues; it reads NGRDSESKRLGSKRAD.

Belongs to the bacterial ribosomal protein bL27 family. The N-terminus is cleaved by ribosomal processing cysteine protease Prp.

This chain is Large ribosomal subunit protein bL27, found in Oceanobacillus iheyensis (strain DSM 14371 / CIP 107618 / JCM 11309 / KCTC 3954 / HTE831).